The following is a 647-amino-acid chain: Acetyl-coenzyme A synthetase (647 aa).

Residues 192 to 195 (RGGR), threonine 310, and asparagine 334 each bind CoA. Residues 386-388 (GEP), 410-415 (DTWWQT), aspartate 499, and arginine 514 each bind ATP. Serine 522 is a binding site for CoA. Arginine 525 serves as a coordination point for ATP. The Mg(2+) site is built by valine 536, histidine 538, and valine 541. Arginine 583 is a binding site for CoA. Lysine 608 is modified (N6-acetyllysine).

Belongs to the ATP-dependent AMP-binding enzyme family. Mg(2+) serves as cofactor. In terms of processing, acetylated. Deacetylation by the SIR2-homolog deacetylase activates the enzyme.

It catalyses the reaction acetate + ATP + CoA = acetyl-CoA + AMP + diphosphate. Its function is as follows. Catalyzes the conversion of acetate into acetyl-CoA (AcCoA), an essential intermediate at the junction of anabolic and catabolic pathways. AcsA undergoes a two-step reaction. In the first half reaction, AcsA combines acetate with ATP to form acetyl-adenylate (AcAMP) intermediate. In the second half reaction, it can then transfer the acetyl group from AcAMP to the sulfhydryl group of CoA, forming the product AcCoA. The sequence is that of Acetyl-coenzyme A synthetase from Caulobacter vibrioides (strain ATCC 19089 / CIP 103742 / CB 15) (Caulobacter crescentus).